We begin with the raw amino-acid sequence, 367 residues long: DNA replication and repair protein RecF (367 aa).

30–37 (GNNAQGKT) provides a ligand contact to ATP.

This sequence belongs to the RecF family.

The protein localises to the cytoplasm. In terms of biological role, the RecF protein is involved in DNA metabolism; it is required for DNA replication and normal SOS inducibility. RecF binds preferentially to single-stranded, linear DNA. It also seems to bind ATP. The sequence is that of DNA replication and repair protein RecF from Clostridium tetani (strain Massachusetts / E88).